We begin with the raw amino-acid sequence, 432 residues long: MTRDHFRSAQMFAEAQKYMPGGVNSPVRAFKAVGGDPIFFLRGEGALLFDVDGNRYIDYVASWGPLILGHAHPLVVRAVKECAEFGTSFGAPNELEIELARLLVEALPSVEMVRLVNSGTEATMSALRLARAYTKREKIVKFEGCYHGHADALLVKAGSGALTLGVPTSPGVPEDTARNTVVAGFNDLEGLKELFARLGEEIAAVIVEPVPANMGLVLPRPGFLKGLRDLTAAYGALLVFDEVITGFRLSYGGAQNLYGVQPDLTCLGKIIGGGLPVGAYGGRRDIMEQVAPSGPVYQAGTLSGNPLAMAAGISTIKALAEPGVYEALESKTLRLARGLEEAAARAGAEVYITQTGSMLCVFFQPGPVTDFAGALRSDTARYSRYFQALLERGVYIAPAQFEALFLSTAHTDEHIDRTLEACEEAFRFAFSG.

Lys269 bears the N6-(pyridoxal phosphate)lysine mark.

Belongs to the class-III pyridoxal-phosphate-dependent aminotransferase family. HemL subfamily. Homodimer. Pyridoxal 5'-phosphate serves as cofactor.

The protein resides in the cytoplasm. The enzyme catalyses (S)-4-amino-5-oxopentanoate = 5-aminolevulinate. It participates in porphyrin-containing compound metabolism; protoporphyrin-IX biosynthesis; 5-aminolevulinate from L-glutamyl-tRNA(Glu): step 2/2. The chain is Glutamate-1-semialdehyde 2,1-aminomutase from Desulforudis audaxviator (strain MP104C).